The sequence spans 53 residues: Rubredoxin (53 aa).

The Rubredoxin-like domain maps to 1 to 53 (MQKYVCDICGYVYDPAVGDPDNGVAPGTAFADLPEDWVCPECGVSKDEFSPEA). Fe cation is bound by residues cysteine 6, cysteine 9, cysteine 39, and cysteine 42.

The protein belongs to the rubredoxin family. The cofactor is Fe(3+).

In terms of biological role, rubredoxin is a small nonheme, iron protein lacking acid-labile sulfide. Its single Fe, chelated to 4 Cys, functions as an electron acceptor and may also stabilize the conformation of the molecule. This Butyribacterium methylotrophicum protein is Rubredoxin.